The following is a 697-amino-acid chain: DNA ligase (697 aa).

NAD(+)-binding positions include 44-48 (DGEFD), 93-94 (SL), and Glu-123. The active-site N6-AMP-lysine intermediate is Lys-125. NAD(+) is bound by residues Arg-146, Glu-186, Lys-302, and Lys-326. 4 residues coordinate Zn(2+): Cys-420, Cys-423, Cys-439, and Cys-445. The region spanning 609-697 (SIPRNLEGLS…GPDAVTDSGV (89 aa)) is the BRCT domain.

Belongs to the NAD-dependent DNA ligase family. LigA subfamily. Requires Mg(2+) as cofactor. Mn(2+) is required as a cofactor.

It carries out the reaction NAD(+) + (deoxyribonucleotide)n-3'-hydroxyl + 5'-phospho-(deoxyribonucleotide)m = (deoxyribonucleotide)n+m + AMP + beta-nicotinamide D-nucleotide.. Functionally, DNA ligase that catalyzes the formation of phosphodiester linkages between 5'-phosphoryl and 3'-hydroxyl groups in double-stranded DNA using NAD as a coenzyme and as the energy source for the reaction. It is essential for DNA replication and repair of damaged DNA. The sequence is that of DNA ligase from Rhodococcus opacus (strain B4).